The following is a 325-amino-acid chain: Glutarate 2-hydroxylase (325 aa).

3 residues coordinate Fe cation: His-160, Asp-162, and His-292.

This sequence belongs to the glutarate hydroxylase family. In terms of assembly, homotetramer. Fe(2+) is required as a cofactor.

It carries out the reaction glutarate + 2-oxoglutarate + O2 = (S)-2-hydroxyglutarate + succinate + CO2. Its pathway is amino-acid degradation. Acts as an alpha-ketoglutarate-dependent dioxygenase catalyzing hydroxylation of glutarate (GA) to L-2-hydroxyglutarate (L2HG). Functions in a L-lysine degradation pathway that proceeds via cadaverine, glutarate and L-2-hydroxyglutarate. The sequence is that of Glutarate 2-hydroxylase from Escherichia coli (strain K12 / MC4100 / BW2952).